A 359-amino-acid chain; its full sequence is 3-dehydroquinate synthase (359 aa).

NAD(+) is bound by residues 70–75 (DGEQYK), 105–109 (GVIGD), 129–130 (TT), K142, K151, and 169–172 (FYKT). Zn(2+) contacts are provided by E184, H247, and H264.

Belongs to the sugar phosphate cyclases superfamily. Dehydroquinate synthase family. Requires Co(2+) as cofactor. The cofactor is Zn(2+). NAD(+) is required as a cofactor.

It is found in the cytoplasm. It carries out the reaction 7-phospho-2-dehydro-3-deoxy-D-arabino-heptonate = 3-dehydroquinate + phosphate. The protein operates within metabolic intermediate biosynthesis; chorismate biosynthesis; chorismate from D-erythrose 4-phosphate and phosphoenolpyruvate: step 2/7. Its function is as follows. Catalyzes the conversion of 3-deoxy-D-arabino-heptulosonate 7-phosphate (DAHP) to dehydroquinate (DHQ). This Francisella tularensis subsp. holarctica (strain OSU18) protein is 3-dehydroquinate synthase.